Consider the following 59-residue polypeptide: Large ribosomal subunit protein bL32 (59 aa).

Residues 1-20 (MAVQQNKKSKSKKGMRRSHD) form a disordered region. Over residues 7–19 (KKSKSKKGMRRSH) the composition is skewed to basic residues.

Belongs to the bacterial ribosomal protein bL32 family.

This chain is Large ribosomal subunit protein bL32, found in Nitratidesulfovibrio vulgaris (strain DSM 19637 / Miyazaki F) (Desulfovibrio vulgaris).